Consider the following 382-residue polypeptide: Succinate--CoA ligase [ADP-forming] subunit beta (382 aa).

The ATP-grasp domain occupies 9–240; that stretch reads KELLKKYGLP…ITQIDPLEVE (232 aa). 4 residues coordinate ATP: Lys-46, Glu-98, Thr-101, and Glu-106. 2 residues coordinate Mg(2+): Asn-195 and Asp-209. Substrate is bound by residues Asn-260 and 317 to 319; that span reads GIL.

This sequence belongs to the succinate/malate CoA ligase beta subunit family. Heterotetramer of two alpha and two beta subunits. Mg(2+) is required as a cofactor.

It carries out the reaction succinate + ATP + CoA = succinyl-CoA + ADP + phosphate. The catalysed reaction is GTP + succinate + CoA = succinyl-CoA + GDP + phosphate. It participates in carbohydrate metabolism; tricarboxylic acid cycle; succinate from succinyl-CoA (ligase route): step 1/1. Succinyl-CoA synthetase functions in the citric acid cycle (TCA), coupling the hydrolysis of succinyl-CoA to the synthesis of either ATP or GTP and thus represents the only step of substrate-level phosphorylation in the TCA. The beta subunit provides nucleotide specificity of the enzyme and binds the substrate succinate, while the binding sites for coenzyme A and phosphate are found in the alpha subunit. This chain is Succinate--CoA ligase [ADP-forming] subunit beta, found in Hydrogenobaculum sp. (strain Y04AAS1).